Here is a 55-residue protein sequence, read N- to C-terminus: ATP synthase protein 8 (55 aa).

Residues 6–26 traverse the membrane as a helical segment; sequence PHPWFAILVFSWIFFLVILPK.

It belongs to the ATPase protein 8 family. In terms of assembly, F-type ATPases have 2 components, CF(1) - the catalytic core - and CF(0) - the membrane proton channel.

It is found in the mitochondrion membrane. Its function is as follows. Mitochondrial membrane ATP synthase (F(1)F(0) ATP synthase or Complex V) produces ATP from ADP in the presence of a proton gradient across the membrane which is generated by electron transport complexes of the respiratory chain. F-type ATPases consist of two structural domains, F(1) - containing the extramembraneous catalytic core and F(0) - containing the membrane proton channel, linked together by a central stalk and a peripheral stalk. During catalysis, ATP synthesis in the catalytic domain of F(1) is coupled via a rotary mechanism of the central stalk subunits to proton translocation. Part of the complex F(0) domain. Minor subunit located with subunit a in the membrane. The chain is ATP synthase protein 8 (MT-ATP8) from Squalus acanthias (Spiny dogfish).